Reading from the N-terminus, the 64-residue chain is MKFLMKKCVRCGRYTFKDVCPVCNGQTTVPHPPRFSPEDKYVKYRVLAKLTKERPSSEGSTLSS.

The protein belongs to the NOP10 family.

In terms of biological role, involved in ribosome biogenesis; more specifically in 18S rRNA pseudouridylation and in cleavage of pre-rRNA. The polypeptide is Ribosome biogenesis protein Nop10 (Ignicoccus hospitalis (strain KIN4/I / DSM 18386 / JCM 14125)).